Consider the following 818-residue polypeptide: MAFSRLTSTHQSNHNGYSNSNKKGQSLPLTLSIDVESPPCVLYGSAMESSGAVLSGLFTVTVVDPYSSAEDKSLKNTESNVSTTSKSLKRKSTFGSALSSRLSSLSASTSNISPSTSSTSISHSPTPANLRIMAGYTKITITSVTLSLVQKIHFHKPFVPNISSMQTCMNCKTKITNMKSWEIQSNTQDLSVGSHSYPFSYLIPGSVPCSSSLGATAETQVKYELIAVVTYIDPHRNSFSSGHSTPRKEGSSSKKRLLQLAMPIAVTRSIPRGPDKNSLRVFPPTELTAAAVLPNVVYPKSTFPLEMKLDGVSSGDRRWRMRKLSWRIEETTRVKAHACPVHKHELRQLEEQVKIKESEKSKKPRSHIKRYGELGPQIRVAVNSLENMPSQRLPGEPGREQAPNSSGPASTGNVGLDDENPVNEDEEDQPGSEFIHPSDDALRQELLMQQQRARQQQLQQELKNNSSLFTEEVRIISKGEMKSGWKTDFDNNGKIELVTEIDCMGLNSGVSNPVMHASTLQTPSTGNKKPSINVACDIQDPNLGLYVSHILAVEIVVAEETLQYANGQPIRKPNSKNKKETNNNTMNVHNPDQRLAELSPIFANRNTPKVRRMGPEDITPVNSNKSNHSTNKEKASNGASNSNIVSVPTGAARVLRMQFRLTVTERSGLGISWDEEVPPIYQDVELLSPPCYELSINNGIKNKLYSTMSTPVRSEDDFVGGSDEDIGNYESQGLEPGPNVQEVTITQNKLTIPPTAHHYQPASSSQRSLTTVQSPPLESVVSVQGSVPFRGHVLTPHSTRDIRIQNFSDFLDSNRITQ.

The tract at residues 1–25 (MAFSRLTSTHQSNHNGYSNSNKKGQ) is disordered. Phosphothreonine is present on T93. Over residues 352–361 (QVKIKESEKS) the composition is skewed to basic and acidic residues. The interval 352-374 (QVKIKESEKSKKPRSHIKRYGEL) is disordered. S384 is modified (phosphoserine). The interval 388–436 (MPSQRLPGEPGREQAPNSSGPASTGNVGLDDENPVNEDEEDQPGSEFIH) is disordered. Over residues 402–413 (APNSSGPASTGN) the composition is skewed to polar residues. The span at 416-430 (LDDENPVNEDEEDQP) shows a compositional bias: acidic residues. Residue K486 forms a Glycyl lysine isopeptide (Lys-Gly) (interchain with G-Cter in ubiquitin) linkage. Disordered stretches follow at residues 568 to 590 (QPIR…NVHN) and 607 to 644 (TPKV…NSNI). T619 is modified (phosphothreonine). A compositionally biased stretch (polar residues) spans 620 to 629 (PVNSNKSNHS). S808 is modified (phosphoserine).

Belongs to the LDB19 family.

It localises to the cytoplasm. The protein resides in the golgi apparatus. In terms of biological role, may be involved in protein-linked oligosaccharide phosphorylation since the deletion reduces the negative charge of the cell surface. Involved in the resistance to EDTA, cadmium chloride, cycloheximide, 6-dimethylaminopurine, methyl caffeate, beta-chloro-L-alanine, caffeine and cerulenin. The chain is Protein LDB19 (LDB19) from Saccharomyces cerevisiae (strain ATCC 204508 / S288c) (Baker's yeast).